A 417-amino-acid polypeptide reads, in one-letter code: Putative F-box protein At3g58950 (417 aa).

The 53-residue stretch at methionine 1–glutamate 53 folds into the F-box domain.

This chain is Putative F-box protein At3g58950, found in Arabidopsis thaliana (Mouse-ear cress).